A 513-amino-acid chain; its full sequence is MITLKRLIHSSRSVCSSGFKVDPNYKLKCGLEIHTQLKTKYKLFSLSSSKFDSEPNTNVSYFDCGLPGTLPKLNPEALYLALKTAVALNSDVQSFSTFDRKHYFYPDQPQGFQITQRYHPIARNGYLELNSKFDDITEDSKTINIEQIQIEQDTGKTNYDKYDKLIKIDLNRSNVPLIELVTKPDFENMSQIRAFIKKYQTLVKHLDVCTGDLETGAIRIDLNVSINGGNRVEVKNLGSSSELASALKSEYHRQIQLTKENFPVIQETRGWNGKETVRLRSKEDAVEYRYVPDSELPFINLDPEISREIAAALPDLPDAIITKLISEPYNLELKHAKFFIANKDILNYYYDLFQIVVIDAGKDHKVANNWLVHELIGAFSKFEVPLDISLIPPTKLGEIIIMVSNDELTTTSAKLLLSQLVKSPDDKELTIQELIEKYDVGKIKDITENELSEAVEEVCVYIIANNQDVIEKIVTGKPKSINYLIGLAMKETNGKVNSNVFESKFKELIADYK.

It belongs to the GatB/GatE family. GatB subfamily. Subunit of the heterotrimeric GatFAB amidotransferase (AdT) complex, composed of A, B and F subunits.

Its subcellular location is the mitochondrion. It carries out the reaction L-glutamyl-tRNA(Gln) + L-glutamine + ATP + H2O = L-glutaminyl-tRNA(Gln) + L-glutamate + ADP + phosphate + H(+). Functionally, allows the formation of correctly charged Gln-tRNA(Gln) through the transamidation of misacylated Glu-tRNA(Gln) in the mitochondria. The reaction takes place in the presence of glutamine and ATP through an activated gamma-phospho-Glu-tRNA(Gln). This is Glutamyl-tRNA(Gln) amidotransferase subunit B, mitochondrial from Debaryomyces hansenii (strain ATCC 36239 / CBS 767 / BCRC 21394 / JCM 1990 / NBRC 0083 / IGC 2968) (Yeast).